Reading from the N-terminus, the 173-residue chain is Large ribosomal subunit protein bL9 (173 aa).

This sequence belongs to the bacterial ribosomal protein bL9 family.

In terms of biological role, binds to the 23S rRNA. The protein is Large ribosomal subunit protein bL9 of Chlamydia felis (strain Fe/C-56) (Chlamydophila felis).